A 360-amino-acid polypeptide reads, in one-letter code: Photosystem II protein D1 (360 aa).

3 helical membrane passes run 29–46, 118–133, and 142–156; these read YIGW…TAAS, HFLI…EWEL, and WIFV…AASA. Residue histidine 118 participates in chlorophyll a binding. Residue tryptophan 126 participates in pheophytin a binding. [CaMn4O5] cluster is bound by residues aspartate 170 and glutamate 189. The helical transmembrane segment at 197–218 threads the bilayer; the sequence is FHMAGVAGVFGGSLFSAMHGSL. Histidine 198 provides a ligand contact to chlorophyll a. Residues histidine 215 and 264–265 contribute to the a quinone site; that span reads SF. Position 215 (histidine 215) interacts with Fe cation. Position 272 (histidine 272) interacts with Fe cation. A helical transmembrane segment spans residues 274 to 288; sequence FLAAWPVVGIWLTAL. Residues histidine 332, glutamate 333, aspartate 342, and alanine 344 each coordinate [CaMn4O5] cluster. A propeptide spanning residues 345–360 is cleaved from the precursor; the sequence is SNEILPVAISAPSVVG.

This sequence belongs to the reaction center PufL/M/PsbA/D family. PSII is composed of 1 copy each of membrane proteins PsbA, PsbB, PsbC, PsbD, PsbE, PsbF, PsbH, PsbI, PsbJ, PsbK, PsbL, PsbM, PsbT, PsbX, PsbY, PsbZ, Psb30/Ycf12, at least 3 peripheral proteins of the oxygen-evolving complex and a large number of cofactors. It forms dimeric complexes. The D1/D2 heterodimer binds P680, chlorophylls that are the primary electron donor of PSII, and subsequent electron acceptors. It shares a non-heme iron and each subunit binds pheophytin, quinone, additional chlorophylls, carotenoids and lipids. D1 provides most of the ligands for the Mn4-Ca-O5 cluster of the oxygen-evolving complex (OEC). There is also a Cl(-1) ion associated with D1 and D2, which is required for oxygen evolution. The PSII complex binds additional chlorophylls, carotenoids and specific lipids. serves as cofactor. In terms of processing, tyr-161 forms a radical intermediate that is referred to as redox-active TyrZ, YZ or Y-Z. C-terminally processed by CTPA; processing is essential to allow assembly of the oxygen-evolving complex and thus photosynthetic growth.

The protein resides in the plastid. The protein localises to the chloroplast thylakoid membrane. It carries out the reaction 2 a plastoquinone + 4 hnu + 2 H2O = 2 a plastoquinol + O2. Its function is as follows. Photosystem II (PSII) is a light-driven water:plastoquinone oxidoreductase that uses light energy to abstract electrons from H(2)O, generating O(2) and a proton gradient subsequently used for ATP formation. It consists of a core antenna complex that captures photons, and an electron transfer chain that converts photonic excitation into a charge separation. The D1/D2 (PsbA/PsbD) reaction center heterodimer binds P680, the primary electron donor of PSII as well as several subsequent electron acceptors. This chain is Photosystem II protein D1, found in Ectocarpus siliculosus (Brown alga).